The primary structure comprises 342 residues: Fructose-1,6-bisphosphatase class 1 (342 aa).

Mg(2+) is bound by residues Glu97, Asp119, Leu121, and Asp122. Substrate contacts are provided by residues 122-125, Asn215, Tyr247, and Lys280; that span reads DGSS. Residue Glu286 coordinates Mg(2+).

The protein belongs to the FBPase class 1 family. In terms of assembly, homotetramer. It depends on Mg(2+) as a cofactor.

It localises to the cytoplasm. It carries out the reaction beta-D-fructose 1,6-bisphosphate + H2O = beta-D-fructose 6-phosphate + phosphate. It participates in carbohydrate biosynthesis; gluconeogenesis. In Leptospira interrogans serogroup Icterohaemorrhagiae serovar copenhageni (strain Fiocruz L1-130), this protein is Fructose-1,6-bisphosphatase class 1.